The following is a 291-amino-acid chain: Exosome complex exonuclease RRP42 (291 aa).

N-acetylalanine is present on Ala-2. Residue Lys-116 is modified to N6-acetyllysine.

Belongs to the RNase PH family. Component of the RNA exosome core complex (Exo-9), composed of EXOSC1, EXOSC2, EXOSC3, EXOSC4, EXOSC5, EXOSC6, EXOSC7, EXOSC8 and EXOSC9; within the complex interacts with EXOSC2 and EXOSC4. The catalytically inactive RNA exosome core complex (Exo-9) associates with the catalytic subunit EXOSC10/RRP6. Exo-9 may associate with DIS3 to form the nucleolar exosome complex, or DIS3L to form the cytoplasmic exosome complex. Exo-9 is formed by a hexameric base ring consisting of the heterodimers EXOSC4-EXOSC9, EXOSC5-EXOSC8 and EXOSC6-EXOSC7, and a cap ring consisting of EXOSC1, EXOSC2 and EXOSC3. The RNA exosome complex associates with cofactors C1D/RRP47, MPHOSPH6/MPP6 and MTREX/MTR4. Interacts with ZC3HAV1. Interacts with DIS3; the interaction is direct.

Its subcellular location is the nucleus. It localises to the nucleolus. The protein resides in the cytoplasm. Non-catalytic component of the RNA exosome complex which has 3'-&gt;5' exoribonuclease activity and participates in a multitude of cellular RNA processing and degradation events. In the nucleus, the RNA exosome complex is involved in proper maturation of stable RNA species such as rRNA, snRNA and snoRNA, in the elimination of RNA processing by-products and non-coding 'pervasive' transcripts, such as antisense RNA species and promoter-upstream transcripts (PROMPTs), and of mRNAs with processing defects, thereby limiting or excluding their export to the cytoplasm. The RNA exosome may be involved in Ig class switch recombination (CSR) and/or Ig variable region somatic hypermutation (SHM) by targeting AICDA deamination activity to transcribed dsDNA substrates. In the cytoplasm, the RNA exosome complex is involved in general mRNA turnover and specifically degrades inherently unstable mRNAs containing AU-rich elements (AREs) within their 3' untranslated regions, and in RNA surveillance pathways, preventing translation of aberrant mRNAs. It seems to be involved in degradation of histone mRNA. The catalytic inactive RNA exosome core complex of 9 subunits (Exo-9) is proposed to play a pivotal role in the binding and presentation of RNA for ribonucleolysis, and to serve as a scaffold for the association with catalytic subunits and accessory proteins or complexes. This chain is Exosome complex exonuclease RRP42 (Exosc7), found in Mus musculus (Mouse).